Here is a 404-residue protein sequence, read N- to C-terminus: Cytochrome b561 and DOMON domain-containing protein At5g35735 (404 aa).

The first 25 residues, 1–25, serve as a signal peptide directing secretion; the sequence is MDRTQSPKTALFAVLATLLVLTVNG. One can recognise a DOMON domain in the interval 49 to 164; sequence LGSFLHWTYN…ITANQLWQVG (116 aa). One can recognise a Cytochrome b561 domain in the interval 170–369; sequence VPASHQTSGD…LEPLTWFIVL (200 aa). Residues 172 to 207 are disordered; sequence ASHQTSGDNMRSSGRIDFRTGQASAGGGGSGDRLRK. The segment covering 173-183 has biased composition (polar residues); sequence SHQTSGDNMRS. Helical transmembrane passes span 210-230 and 241-261; these read THGV…AMMA and WFYL…AGWA. Heme b is bound by residues His211, His245, and His278. A helical transmembrane segment spans residues 280–300; that stretch reads NLGIALFTFATLQVFALLVRP. Residue His314 participates in heme b binding. 2 helical membrane-spanning segments follow: residues 316-336 and 349-369; these read TVGY…FDIL and ILIF…FIVL. A disordered region spans residues 376 to 404; the sequence is GNTVAAPTSSKYSNGVNGTTTTGPHHQDA. A compositionally biased stretch (polar residues) spans 380–404; the sequence is AAPTSSKYSNGVNGTTTTGPHHQDA.

It depends on heme b as a cofactor.

The protein localises to the membrane. May act as a catecholamine-responsive trans-membrane electron transporter. The chain is Cytochrome b561 and DOMON domain-containing protein At5g35735 from Arabidopsis thaliana (Mouse-ear cress).